A 353-amino-acid chain; its full sequence is Putative transport protein YrrI (353 aa).

8 helical membrane passes run 8–28 (LLLWVAICLLVLLTVYVFFML), 37–57 (LVIKTIFIPLIISIFISYLLL), 77–97 (IYVLFFGGIGWALYKGVPVLI), 165–185 (FLIAATIPFLVFYMVKDIELM), 220–240 (LLVCLILGVIAGISFWVFGLP), 243–263 (LILGLISGVTNVIPYFGPFIG), 269–289 (LIAMTISVKAVLVVVITVFIL), and 311–331 (VVIMLALLAGGELAGIVGMIL).

The protein belongs to the autoinducer-2 exporter (AI-2E) (TC 2.A.86) family.

It is found in the cell membrane. This Bacillus subtilis (strain 168) protein is Putative transport protein YrrI (yrrI).